The primary structure comprises 410 residues: Mating-type locus allele B5 protein (410 aa).

The variable domain between B alleles stretch occupies residues 1-110 (MSSDPNFSLT…FNVVSPAVVC (110 aa)). The homeobox; TALE-type DNA-binding region spans 107–184 (AVVCRNLSED…NARRRSGWSH (78 aa)). Residues 111-410 (RNLSEDLPAY…PFLCLSVAFV (300 aa)) form a highly conserved between B alleles region. Disordered regions lie at residues 201 to 241 (VRAK…TPAD), 275 to 336 (NKKT…PELS), and 366 to 395 (ILQS…PDEV). The segment covering 206–222 (SSSNQSTPPSPTSEYPS) has biased composition (low complexity). The Nuclear localization signal motif lies at 276–308 (KKTPKPGMPRPVTTVTKRQPARKTKPAAKPKSR). Residues 294-307 (QPARKTKPAAKPKS) show a composition bias toward basic residues. The segment covering 312 to 336 (PRASTTPSIDSTLDSSKLESTPELS) has biased composition (polar residues). Positions 333-410 (PELSMCSTAD…PFLCLSVAFV (78 aa)) are not essential for B5 function. Basic residues predominate over residues 375–388 (RGNRKVKALPKRAG).

Belongs to the TALE/M-ATYP homeobox family.

Its subcellular location is the nucleus. Its function is as follows. The B locus has at least 25 alleles, and any combination of two different B alleles yields a multimeric regulatory protein, that activates genes responsible for the pathogenicity and for the sexual development of the fungus within the corn plant. This is Mating-type locus allele B5 protein from Mycosarcoma maydis (Corn smut fungus).